Consider the following 126-residue polypeptide: Small ribosomal subunit protein uS13 (126 aa).

Positions 94 to 126 (GLPVRGQKTRNNAHTVKGKPKAAIAGKKKNKVN) are disordered. Basic residues predominate over residues 109-126 (VKGKPKAAIAGKKKNKVN).

It belongs to the universal ribosomal protein uS13 family. In terms of assembly, part of the 30S ribosomal subunit. Forms a loose heterodimer with protein S19. Forms two bridges to the 50S subunit in the 70S ribosome.

Functionally, located at the top of the head of the 30S subunit, it contacts several helices of the 16S rRNA. In the 70S ribosome it contacts the 23S rRNA (bridge B1a) and protein L5 of the 50S subunit (bridge B1b), connecting the 2 subunits; these bridges are implicated in subunit movement. Contacts the tRNAs in the A and P-sites. The polypeptide is Small ribosomal subunit protein uS13 (Aster yellows witches'-broom phytoplasma (strain AYWB)).